Consider the following 196-residue polypeptide: 7-methyl-GTP pyrophosphatase (196 aa).

D72 serves as the catalytic Proton acceptor.

This sequence belongs to the Maf family. YceF subfamily. A divalent metal cation serves as cofactor.

The protein localises to the cytoplasm. It carries out the reaction N(7)-methyl-GTP + H2O = N(7)-methyl-GMP + diphosphate + H(+). Its function is as follows. Nucleoside triphosphate pyrophosphatase that hydrolyzes 7-methyl-GTP (m(7)GTP). May have a dual role in cell division arrest and in preventing the incorporation of modified nucleotides into cellular nucleic acids. The sequence is that of 7-methyl-GTP pyrophosphatase from Neisseria meningitidis serogroup B (strain ATCC BAA-335 / MC58).